The chain runs to 600 residues: Proline--tRNA ligase (600 aa).

The protein belongs to the class-II aminoacyl-tRNA synthetase family. ProS type 1 subfamily. Homodimer.

The protein localises to the cytoplasm. The catalysed reaction is tRNA(Pro) + L-proline + ATP = L-prolyl-tRNA(Pro) + AMP + diphosphate. In terms of biological role, catalyzes the attachment of proline to tRNA(Pro) in a two-step reaction: proline is first activated by ATP to form Pro-AMP and then transferred to the acceptor end of tRNA(Pro). As ProRS can inadvertently accommodate and process non-cognate amino acids such as alanine and cysteine, to avoid such errors it has two additional distinct editing activities against alanine. One activity is designated as 'pretransfer' editing and involves the tRNA(Pro)-independent hydrolysis of activated Ala-AMP. The other activity is designated 'posttransfer' editing and involves deacylation of mischarged Ala-tRNA(Pro). The misacylated Cys-tRNA(Pro) is not edited by ProRS. This Synechococcus sp. (strain RCC307) protein is Proline--tRNA ligase.